Consider the following 93-residue polypeptide: Small ribosomal subunit protein uS19 (93 aa).

Belongs to the universal ribosomal protein uS19 family.

Protein S19 forms a complex with S13 that binds strongly to the 16S ribosomal RNA. In Ehrlichia ruminantium (strain Welgevonden), this protein is Small ribosomal subunit protein uS19.